The following is a 949-amino-acid chain: Glycine dehydrogenase (decarboxylating) (949 aa).

Lys-704 carries the N6-(pyridoxal phosphate)lysine modification.

This sequence belongs to the GcvP family. The glycine cleavage system is composed of four proteins: P, T, L and H. Requires pyridoxal 5'-phosphate as cofactor.

It carries out the reaction N(6)-[(R)-lipoyl]-L-lysyl-[glycine-cleavage complex H protein] + glycine + H(+) = N(6)-[(R)-S(8)-aminomethyldihydrolipoyl]-L-lysyl-[glycine-cleavage complex H protein] + CO2. In terms of biological role, the glycine cleavage system catalyzes the degradation of glycine. The P protein binds the alpha-amino group of glycine through its pyridoxal phosphate cofactor; CO(2) is released and the remaining methylamine moiety is then transferred to the lipoamide cofactor of the H protein. The protein is Glycine dehydrogenase (decarboxylating) of Bacteroides fragilis (strain YCH46).